We begin with the raw amino-acid sequence, 162 residues long: UPF0178 protein Rsph17029_2512 (162 aa).

Belongs to the UPF0178 family.

This Cereibacter sphaeroides (strain ATCC 17029 / ATH 2.4.9) (Rhodobacter sphaeroides) protein is UPF0178 protein Rsph17029_2512.